Consider the following 661-residue polypeptide: mRNA 3'-end-processing protein RNA14 (661 aa).

The segment at 1–29 is disordered; sequence MSDGTATPDPLPSSSNTSTSLRPTSRVRD. The span at 12–24 shows a compositional bias: low complexity; that stretch reads PSSSNTSTSLRPT. 6 HAT repeats span residues 62–94, 99–133, 143–179, 190–223, 264–296, and 305–337; these read KQWK…LEFD, LDAA…YVRK, EARN…FLEH, QRVQ…WEQD, TLNQ…WESD, and LHKA…YQGE.

The protein resides in the nucleus. It is found in the cytoplasm. In terms of biological role, component of the cleavage factor IA (CFIA) complex, which is involved in the endonucleolytic cleavage during polyadenylation-dependent pre-mRNA 3'-end formation. The chain is mRNA 3'-end-processing protein RNA14 (RNA14) from Kluyveromyces lactis (strain ATCC 8585 / CBS 2359 / DSM 70799 / NBRC 1267 / NRRL Y-1140 / WM37) (Yeast).